The chain runs to 121 residues: Large ribosomal subunit protein eL31 (121 aa).

This sequence belongs to the eukaryotic ribosomal protein eL31 family.

The protein is Large ribosomal subunit protein eL31 (RPL31) of Perilla frutescens (Beefsteak mint).